The chain runs to 181 residues: Acireductone dioxygenase (181 aa).

His97, His99, Glu103, and His141 together coordinate Fe(2+). Residues His97, His99, Glu103, and His141 each coordinate Ni(2+).

Belongs to the acireductone dioxygenase (ARD) family. As to quaternary structure, monomer. Fe(2+) serves as cofactor. Ni(2+) is required as a cofactor.

It carries out the reaction 1,2-dihydroxy-5-(methylsulfanyl)pent-1-en-3-one + O2 = 3-(methylsulfanyl)propanoate + CO + formate + 2 H(+). It catalyses the reaction 1,2-dihydroxy-5-(methylsulfanyl)pent-1-en-3-one + O2 = 4-methylsulfanyl-2-oxobutanoate + formate + 2 H(+). The protein operates within amino-acid biosynthesis; L-methionine biosynthesis via salvage pathway; L-methionine from S-methyl-5-thio-alpha-D-ribose 1-phosphate: step 5/6. In terms of biological role, catalyzes 2 different reactions between oxygen and the acireductone 1,2-dihydroxy-3-keto-5-methylthiopentene (DHK-MTPene) depending upon the metal bound in the active site. Fe-containing acireductone dioxygenase (Fe-ARD) produces formate and 2-keto-4-methylthiobutyrate (KMTB), the alpha-ketoacid precursor of methionine in the methionine recycle pathway. Ni-containing acireductone dioxygenase (Ni-ARD) produces methylthiopropionate, carbon monoxide and formate, and does not lie on the methionine recycle pathway. In Pseudomonas aeruginosa (strain UCBPP-PA14), this protein is Acireductone dioxygenase.